A 399-amino-acid chain; its full sequence is Glutamyl-tRNA reductase (399 aa).

Residues 45-48 (TCNR), serine 93, 98-100 (EDQ), and glutamine 104 each bind substrate. The active-site Nucleophile is the cysteine 46. 173–178 (GAGKMG) provides a ligand contact to NADP(+).

Belongs to the glutamyl-tRNA reductase family. As to quaternary structure, homodimer.

The enzyme catalyses (S)-4-amino-5-oxopentanoate + tRNA(Glu) + NADP(+) = L-glutamyl-tRNA(Glu) + NADPH + H(+). It functions in the pathway porphyrin-containing compound metabolism; protoporphyrin-IX biosynthesis; 5-aminolevulinate from L-glutamyl-tRNA(Glu): step 1/2. Functionally, catalyzes the NADPH-dependent reduction of glutamyl-tRNA(Glu) to glutamate 1-semialdehyde (GSA). In Methanobrevibacter smithii (strain ATCC 35061 / DSM 861 / OCM 144 / PS), this protein is Glutamyl-tRNA reductase.